Reading from the N-terminus, the 146-residue chain is uncharacterized protein (146 aa).

A run of 2 helical transmembrane segments spans residues Ala-89–Tyr-111 and Ile-121–Val-143.

Its subcellular location is the cell membrane. This is an uncharacterized protein from Archaeoglobus fulgidus (strain ATCC 49558 / DSM 4304 / JCM 9628 / NBRC 100126 / VC-16).